Reading from the N-terminus, the 87-residue chain is Small ribosomal subunit protein bS20 (87 aa).

The tract at residues 1–29 (MANTAQARKRARQAVKQNAHNSSQRSTLR) is disordered. A compositionally biased stretch (polar residues) spans 20–29 (HNSSQRSTLR).

This sequence belongs to the bacterial ribosomal protein bS20 family.

Binds directly to 16S ribosomal RNA. The protein is Small ribosomal subunit protein bS20 of Herminiimonas arsenicoxydans.